Here is a 100-residue protein sequence, read N- to C-terminus: RxLR effector protein Avrblb2 (100 aa).

An N-terminal signal peptide occupies residues 1–22; that stretch reads MRSFLYGVLAFAVLARSSAVAA. Positions 43–57 match the RxLR-dEER motif; it reads RSLRIEAQEVIQSGR. Residues 78–82 carry the Calmodulin-binding motif motif; that stretch reads RPDIK.

Belongs to the RxLR effector family. Interacts with the host papain-like cysteine protease C14. Interacts with the host calmodulin.

It is found in the secreted. Its subcellular location is the host cell membrane. In terms of biological role, secreted effector that acts as an elicitor of hypersensitive response (HR) specifically on plants carrying defense protein Rpi-blb2. Enhances P.infestans colonization of Nicotiana benthamiana leaves. Interacts with, and subsequently prevents secretion into the apoplast of the host papain-like cysteine protease C14, thus promoting virulence by interfering with the execution of host defenses. Associates with calmodulin at the host plasma membrane to interfere with plant defense-associated calcium signaling in hosts. This is RxLR effector protein Avrblb2 from Phytophthora infestans (strain T30-4) (Potato late blight agent).